A 467-amino-acid chain; its full sequence is 3-isopropylmalate dehydratase large subunit (467 aa).

Cysteine 347, cysteine 408, and cysteine 411 together coordinate [4Fe-4S] cluster.

It belongs to the aconitase/IPM isomerase family. LeuC type 1 subfamily. Heterodimer of LeuC and LeuD. [4Fe-4S] cluster serves as cofactor.

It catalyses the reaction (2R,3S)-3-isopropylmalate = (2S)-2-isopropylmalate. It participates in amino-acid biosynthesis; L-leucine biosynthesis; L-leucine from 3-methyl-2-oxobutanoate: step 2/4. Catalyzes the isomerization between 2-isopropylmalate and 3-isopropylmalate, via the formation of 2-isopropylmaleate. The protein is 3-isopropylmalate dehydratase large subunit of Bordetella bronchiseptica (strain ATCC BAA-588 / NCTC 13252 / RB50) (Alcaligenes bronchisepticus).